A 523-amino-acid polypeptide reads, in one-letter code: 2-isopropylmalate synthase (523 aa).

The Pyruvate carboxyltransferase domain maps to 5–267 (VIIFDTTLRD…HTNINHHEIW (263 aa)). The Mn(2+) site is built by D14, H202, H204, and N238. The regulatory domain stretch occupies residues 392–523 (RLDYFSVQSG…QNKENNKETV (132 aa)).

Belongs to the alpha-IPM synthase/homocitrate synthase family. LeuA type 1 subfamily. Homodimer. Mn(2+) serves as cofactor.

Its subcellular location is the cytoplasm. The enzyme catalyses 3-methyl-2-oxobutanoate + acetyl-CoA + H2O = (2S)-2-isopropylmalate + CoA + H(+). Its pathway is amino-acid biosynthesis; L-leucine biosynthesis; L-leucine from 3-methyl-2-oxobutanoate: step 1/4. Its function is as follows. Catalyzes the condensation of the acetyl group of acetyl-CoA with 3-methyl-2-oxobutanoate (2-ketoisovalerate) to form 3-carboxy-3-hydroxy-4-methylpentanoate (2-isopropylmalate). This is 2-isopropylmalate synthase from Salmonella agona (strain SL483).